Reading from the N-terminus, the 158-residue chain is Snaclec agglucetin subunit alpha-2 (158 aa).

Positions 1–23 (MGRFIFVSFGLLVVFLSLSGTGA) are cleaved as a signal peptide. Cystine bridges form between cysteine 27-cysteine 38, cysteine 55-cysteine 152, and cysteine 127-cysteine 144. Residues 34 to 153 (YDQYCYQVIK…CIQLNPFVCK (120 aa)) enclose the C-type lectin domain.

This sequence belongs to the snaclec family. In terms of assembly, heterotetramer of the subunits alpha-1, alpha-2, beta-1 and beta-2; disulfide-linked. In terms of tissue distribution, expressed by the venom gland.

The protein localises to the secreted. In terms of biological role, agglucetin specifically causes platelet aggregation and surface exposure of integrin alpha-IIb/beta-3 with a GPIb-(GP1BA-) dependent manner in washed platelets. It binds to human platelets in a saturable manner, and its binding is specifically blocked by anti-GP Ib mAb. It regulates endothelial cell survival and promotes angiogenesis by activating integrin alpha-v/beta-3 signaling through FAK/phosphatidylinositol 3-kinase (PI3K)/Akt pathway. The protein is Snaclec agglucetin subunit alpha-2 of Deinagkistrodon acutus (Hundred-pace snake).